A 724-amino-acid polypeptide reads, in one-letter code: 1,4-alpha-glucan branching enzyme GlgB 1 (724 aa).

D403 acts as the Nucleophile in catalysis. The Proton donor role is filled by E456.

The protein belongs to the glycosyl hydrolase 13 family. GlgB subfamily. In terms of assembly, monomer.

It catalyses the reaction Transfers a segment of a (1-&gt;4)-alpha-D-glucan chain to a primary hydroxy group in a similar glucan chain.. Its pathway is glycan biosynthesis; glycogen biosynthesis. Catalyzes the formation of the alpha-1,6-glucosidic linkages in glycogen by scission of a 1,4-alpha-linked oligosaccharide from growing alpha-1,4-glucan chains and the subsequent attachment of the oligosaccharide to the alpha-1,6 position. This Xanthomonas axonopodis pv. citri (strain 306) protein is 1,4-alpha-glucan branching enzyme GlgB 1 (glgB1).